The chain runs to 1160 residues: Pesticidal crystal protein Cry8Ca (1160 aa).

The protein belongs to the delta endotoxin family.

Its function is as follows. Promotes colloidosmotic lysis by binding to the midgut epithelial cells of insects. Active on various scarabaeid beetles such as Anomala cuprea, A.rufocuprea and Popillia japonica. This Bacillus thuringiensis subsp. japonensis protein is Pesticidal crystal protein Cry8Ca (cry8Ca).